The chain runs to 252 residues: MIATLGNLIIPVIFVNYVASETYKLTQRAFDTNFSSTRYDLKNSISRSLYDNPCMGDCVNYTCVVNAFGELEICVTAVDTVRIRHPAAGVLQRDVKYCRGSCVNDTNAPWCIVDTSGSFDLCGPFDAGSKVDSLAYEFLEDRVSFTGRSYGCESGCERTTAPCRVGGTSLPVLCSPIAFVLPPTTPTLKRRTKRNAFVDCFSRNTLLGNNVSSSFIKYLDMFNAEWIDYNVRGHQDDDRIRTIHYGHPYCRR.

The N-terminal stretch at 1–20 (MIATLGNLIIPVIFVNYVAS) is a signal peptide.

Belongs to the ascovirus HvAV ORF17 family.

This is an uncharacterized protein from Spodoptera frugiperda ascovirus 1a (SfAV-1a).